The chain runs to 157 residues: 2-C-methyl-D-erythritol 2,4-cyclodiphosphate synthase (157 aa).

2 residues coordinate a divalent metal cation: D8 and H10. 4-CDP-2-C-methyl-D-erythritol 2-phosphate contacts are provided by residues 8–10 (DVH) and 34–35 (HS). Position 42 (H42) interacts with a divalent metal cation. 4-CDP-2-C-methyl-D-erythritol 2-phosphate contacts are provided by residues 56–58 (DIG), 61–65 (FPDTD), 100–106 (AQAPKMA), 132–135 (TTTE), F139, and R142.

It belongs to the IspF family. As to quaternary structure, homotrimer. The cofactor is a divalent metal cation.

The enzyme catalyses 4-CDP-2-C-methyl-D-erythritol 2-phosphate = 2-C-methyl-D-erythritol 2,4-cyclic diphosphate + CMP. Its pathway is isoprenoid biosynthesis; isopentenyl diphosphate biosynthesis via DXP pathway; isopentenyl diphosphate from 1-deoxy-D-xylulose 5-phosphate: step 4/6. Its function is as follows. Involved in the biosynthesis of isopentenyl diphosphate (IPP) and dimethylallyl diphosphate (DMAPP), two major building blocks of isoprenoid compounds. Catalyzes the conversion of 4-diphosphocytidyl-2-C-methyl-D-erythritol 2-phosphate (CDP-ME2P) to 2-C-methyl-D-erythritol 2,4-cyclodiphosphate (ME-CPP) with a corresponding release of cytidine 5-monophosphate (CMP). The polypeptide is 2-C-methyl-D-erythritol 2,4-cyclodiphosphate synthase (Pseudomonas putida (strain GB-1)).